The primary structure comprises 298 residues: Leucine-rich repeat-containing protein 55 (298 aa).

The N-terminal stretch at 1–34 is a signal peptide; that stretch reads MGDTWAQLPWPGPPHSALLLVFFLLAAGVMHSDA. Positions 35-65 constitute an LRRNT domain; it reads GTSCPVLCTCRNQVVDCSNQRLFSVPPDLPM. 2 cysteine pairs are disulfide-bonded: Cys-38–Cys-44 and Cys-42–Cys-51. LRR repeat units follow at residues 66–87, 90–111, 114–135, 138–160, and 163–186; these read DTRN…YLTC, ELRV…LFLH, RLAH…MFRE, GLVH…AFQG, and HLRD…EGLP. In terms of domain architecture, LRRCT spans 196–251; it reads NPWVCGCTMEPLLKWLRNRIQRCTADSQLAECRGPPEVEGAPLFSLTEESFKACHL. Cystine bridges form between Cys-200-Cys-227 and Cys-202-Cys-249. A helical membrane pass occupies residues 259-279; that stretch reads LFIAFVGFVVSIASVATNFLL.

As to quaternary structure, interacts with KCNMA1.

It localises to the cell membrane. Auxiliary protein of the large-conductance, voltage and calcium-activated potassium channel (BK alpha). Modulates gating properties by producing a marked shift in the BK channel's voltage dependence of activation in the hyperpolarizing direction, and in the absence of calcium. The chain is Leucine-rich repeat-containing protein 55 (Lrrc55) from Mus musculus (Mouse).